Consider the following 34-residue polypeptide: uncharacterized protein (34 aa).

The span at 1-12 (MFSHFEVSENRP) shows a compositional bias: basic and acidic residues. The disordered stretch occupies residues 1–21 (MFSHFEVSENRPRKQPRRKRI).

This is an uncharacterized protein from Saccharomyces cerevisiae (strain ATCC 204508 / S288c) (Baker's yeast).